We begin with the raw amino-acid sequence, 229 residues long: Large ribosomal subunit protein uL1 (229 aa).

The protein belongs to the universal ribosomal protein uL1 family. Part of the 50S ribosomal subunit.

Binds directly to 23S rRNA. The L1 stalk is quite mobile in the ribosome, and is involved in E site tRNA release. In terms of biological role, protein L1 is also a translational repressor protein, it controls the translation of the L11 operon by binding to its mRNA. In Streptococcus uberis (strain ATCC BAA-854 / 0140J), this protein is Large ribosomal subunit protein uL1.